A 291-amino-acid chain; its full sequence is uncharacterized protein (291 aa).

The segment at 1-55 (MRTHDIPRSPLVGHKKNAAPDGIGASRACCPARENEPFKKGSTNSRGGGVEWSRS) is disordered. Transmembrane regions (helical) follow at residues 74–96 (WWAVGPVLGICAGVWGAAHPVHA) and 188–210 (YYYLAIPVALTAGYTVAFWRIRL).

The protein to T.pallidum TP_0733.

It localises to the cell membrane. This is an uncharacterized protein from Treponema pallidum (strain Nichols).